A 462-amino-acid chain; its full sequence is A-type ATP synthase subunit B (462 aa).

It belongs to the ATPase alpha/beta chains family. In terms of assembly, has multiple subunits with at least A(3), B(3), C, D, E, F, H, I and proteolipid K(x).

The protein localises to the cell membrane. Component of the A-type ATP synthase that produces ATP from ADP in the presence of a proton gradient across the membrane. The B chain is a regulatory subunit. The chain is A-type ATP synthase subunit B from Methanobrevibacter smithii (strain ATCC 35061 / DSM 861 / OCM 144 / PS).